The primary structure comprises 195 residues: Elongation factor Ts (195 aa).

Residues 81 to 84 (TDFV) are involved in Mg(2+) ion dislocation from EF-Tu.

Belongs to the EF-Ts family.

The protein localises to the cytoplasm. Functionally, associates with the EF-Tu.GDP complex and induces the exchange of GDP to GTP. It remains bound to the aminoacyl-tRNA.EF-Tu.GTP complex up to the GTP hydrolysis stage on the ribosome. The polypeptide is Elongation factor Ts (Rubrobacter xylanophilus (strain DSM 9941 / JCM 11954 / NBRC 16129 / PRD-1)).